A 135-amino-acid chain; its full sequence is Protein NrdI (135 aa).

This sequence belongs to the NrdI family.

Probably involved in ribonucleotide reductase function. The chain is Protein NrdI from Pectobacterium atrosepticum (strain SCRI 1043 / ATCC BAA-672) (Erwinia carotovora subsp. atroseptica).